We begin with the raw amino-acid sequence, 109 residues long: Protein phosphatase 1 regulatory subunit 1C (109 aa).

The disordered stretch occupies residues 25–109 (AEQIRKRRPT…TNEREEQRDH (85 aa)). The span at 45–54 (NPPEIDDKRG) shows a compositional bias: basic and acidic residues. The segment covering 55–75 (PNTQGELQNASPKQRKQSVYT) has biased composition (polar residues). The span at 100-109 (TNEREEQRDH) shows a compositional bias: basic and acidic residues.

It belongs to the protein phosphatase inhibitor 1 family.

It localises to the cytoplasm. Functionally, may increase cell susceptibility to TNF-induced apoptosis. This chain is Protein phosphatase 1 regulatory subunit 1C (PPP1R1C), found in Homo sapiens (Human).